An 89-amino-acid chain; its full sequence is UPF0297 protein SUB1776 (89 aa).

Belongs to the UPF0297 family.

The sequence is that of UPF0297 protein SUB1776 from Streptococcus uberis (strain ATCC BAA-854 / 0140J).